The following is a 187-amino-acid chain: Elongation factor P (187 aa).

This sequence belongs to the elongation factor P family.

The protein localises to the cytoplasm. The protein operates within protein biosynthesis; polypeptide chain elongation. In terms of biological role, involved in peptide bond synthesis. Stimulates efficient translation and peptide-bond synthesis on native or reconstituted 70S ribosomes in vitro. Probably functions indirectly by altering the affinity of the ribosome for aminoacyl-tRNA, thus increasing their reactivity as acceptors for peptidyl transferase. The chain is Elongation factor P from Mycobacteroides abscessus (strain ATCC 19977 / DSM 44196 / CCUG 20993 / CIP 104536 / JCM 13569 / NCTC 13031 / TMC 1543 / L948) (Mycobacterium abscessus).